Consider the following 278-residue polypeptide: Bifunctional protein FolD (278 aa).

NADP(+) is bound by residues 163–165 (GRS), serine 188, and valine 229.

Belongs to the tetrahydrofolate dehydrogenase/cyclohydrolase family. As to quaternary structure, homodimer.

The enzyme catalyses (6R)-5,10-methylene-5,6,7,8-tetrahydrofolate + NADP(+) = (6R)-5,10-methenyltetrahydrofolate + NADPH. It carries out the reaction (6R)-5,10-methenyltetrahydrofolate + H2O = (6R)-10-formyltetrahydrofolate + H(+). It participates in one-carbon metabolism; tetrahydrofolate interconversion. Functionally, catalyzes the oxidation of 5,10-methylenetetrahydrofolate to 5,10-methenyltetrahydrofolate and then the hydrolysis of 5,10-methenyltetrahydrofolate to 10-formyltetrahydrofolate. In Exiguobacterium sp. (strain ATCC BAA-1283 / AT1b), this protein is Bifunctional protein FolD.